A 551-amino-acid chain; its full sequence is L-lactate permease (551 aa).

Transmembrane regions (helical) follow at residues 13–33 (NIWL…FALI), 37–57 (LKGY…ALLF), 69–89 (VVYG…AAVF), 131–151 (GAAG…GLGF), 159–179 (LCLI…PILV), 194–214 (MVGR…MAIM), 220–240 (IKET…AQYL), 244–264 (FIGP…CLTL), 366–386 (FDWF…SIVW), 405–425 (LALP…SNYS), 438–458 (TGHA…FLTG), 494–514 (VTGK…VGLV), and 530–550 (IFTC…TWMI).

Belongs to the lactate permease family.

It is found in the cell inner membrane. The catalysed reaction is (S)-lactate(in) + H(+)(in) = (S)-lactate(out) + H(+)(out). The enzyme catalyses (R)-lactate(in) + H(+)(in) = (R)-lactate(out) + H(+)(out). It catalyses the reaction glycolate(in) + H(+)(in) = glycolate(out) + H(+)(out). Its activity is regulated as follows. Inhibited by the proton ionophore carbonyl cyanide m-chlorophenylhydrazone (CCCP). Its function is as follows. Uptake of L-lactate across the membrane. Can also transport D-lactate and glycolate. Seems to be driven by a proton motive force. This Escherichia coli (strain K12) protein is L-lactate permease.